We begin with the raw amino-acid sequence, 1022 residues long: Leucine--tRNA ligase (1022 aa).

Positions 47 to 57 (PYPNSPMHLGH) match the 'HIGH' region motif. The 'KMSKS' region motif lies at 697–701 (KMSKS). Lys-700 provides a ligand contact to ATP.

Belongs to the class-I aminoacyl-tRNA synthetase family.

The protein localises to the cytoplasm. The enzyme catalyses tRNA(Leu) + L-leucine + ATP = L-leucyl-tRNA(Leu) + AMP + diphosphate. In Ignicoccus hospitalis (strain KIN4/I / DSM 18386 / JCM 14125), this protein is Leucine--tRNA ligase.